A 609-amino-acid chain; its full sequence is Proteasome-associated ATPase (609 aa).

The tract at residues 1–25 (MADSERSEAFGTPDDTPLSSNDAAE) is disordered. The stretch at 19-96 (SSNDAAELEQ…LREEVDRLGQ (78 aa)) forms a coiled coil. Residue 296-301 (GCGKTL) participates in ATP binding. The tract at residues 608–609 (YL) is docks into pockets in the proteasome alpha-ring.

This sequence belongs to the AAA ATPase family. In terms of assembly, homohexamer. Assembles into a hexameric ring structure that caps the 20S proteasome core. Strongly interacts with the prokaryotic ubiquitin-like protein Pup through a hydrophobic interface; the interacting region of ARC lies in its N-terminal coiled-coil domain. There is one Pup binding site per ARC hexamer ring. Upon ATP-binding, the C-terminus of ARC interacts with the alpha-rings of the proteasome core, possibly by binding to the intersubunit pockets.

It participates in protein degradation; proteasomal Pup-dependent pathway. In terms of biological role, ATPase which is responsible for recognizing, binding, unfolding and translocation of pupylated proteins into the bacterial 20S proteasome core particle. May be essential for opening the gate of the 20S proteasome via an interaction with its C-terminus, thereby allowing substrate entry and access to the site of proteolysis. Thus, the C-termini of the proteasomal ATPase may function like a 'key in a lock' to induce gate opening and therefore regulate proteolysis. The chain is Proteasome-associated ATPase from Mycobacterium marinum (strain ATCC BAA-535 / M).